The following is a 426-amino-acid chain: Glutamate-1-semialdehyde 2,1-aminomutase (426 aa).

Lys-265 bears the N6-(pyridoxal phosphate)lysine mark.

It belongs to the class-III pyridoxal-phosphate-dependent aminotransferase family. HemL subfamily. In terms of assembly, homodimer. Pyridoxal 5'-phosphate is required as a cofactor.

Its subcellular location is the cytoplasm. The catalysed reaction is (S)-4-amino-5-oxopentanoate = 5-aminolevulinate. It participates in porphyrin-containing compound metabolism; protoporphyrin-IX biosynthesis; 5-aminolevulinate from L-glutamyl-tRNA(Glu): step 2/2. This chain is Glutamate-1-semialdehyde 2,1-aminomutase, found in Escherichia coli O9:H4 (strain HS).